The primary structure comprises 42 residues: Photosystem I reaction center subunit IX (42 aa).

The helical transmembrane segment at 7 to 27 threads the bilayer; that stretch reads YLSTAPVLSALWFAILAGLLI.

Belongs to the PsaJ family.

It localises to the plastid. The protein resides in the chloroplast thylakoid membrane. May help in the organization of the PsaE and PsaF subunits. In Chlorokybus atmophyticus (Soil alga), this protein is Photosystem I reaction center subunit IX.